A 509-amino-acid chain; its full sequence is DEAD-box ATP-dependent RNA helicase CshA (509 aa).

Residues 2-30 (QNFKELGISDKTVQTLEAMGFKEPTPIQK) carry the Q motif motif. Residues 33–203 (IPYALEGDDI…QQFMKAPKII (171 aa)) enclose the Helicase ATP-binding domain. 46 to 53 (AQTGTGKT) lines the ATP pocket. Residues 150–153 (DEAD) carry the DEAD box motif. In terms of domain architecture, Helicase C-terminal spans 214–375 (QIDEYYTIVK…LRPPHRKEVL (162 aa)). 2 stretches are compositionally biased toward basic residues: residues 440-459 (ARKNRSSKGGSRRSNHKRGN) and 467-482 (RRSKGSKGQSSKKKNQ). Positions 440 to 509 (ARKNRSSKGG…KGRTFADHQK (70 aa)) are disordered. Over residues 483–492 (KKFDRRDKQQ) the composition is skewed to basic and acidic residues.

This sequence belongs to the DEAD box helicase family. CshA subfamily. Oligomerizes, may be a member of the RNA degradosome.

Its subcellular location is the cytoplasm. The enzyme catalyses ATP + H2O = ADP + phosphate + H(+). Functionally, DEAD-box RNA helicase possibly involved in RNA degradation. Unwinds dsRNA in both 5'- and 3'-directions, has RNA-dependent ATPase activity. This chain is DEAD-box ATP-dependent RNA helicase CshA, found in Staphylococcus epidermidis (strain ATCC 12228 / FDA PCI 1200).